The following is a 317-amino-acid chain: Taste receptor type 2 member 14 (317 aa).

The Extracellular portion of the chain corresponds to 1–7; the sequence is MGGVIKS. The helical transmembrane segment at 8–28 threads the bilayer; sequence IFTFVLIVEFIIGNLGNSFIA. The Cytoplasmic segment spans residues 29–55; that stretch reads LVNCIDWVKGRKISSVDRILTALAISK. A helical transmembrane segment spans residues 56–76; it reads ISLVWLIFGSWCVSVFFPALF. Residues 77–87 lie on the Extracellular side of the membrane; it reads ATEKMFRMLTN. Residues Thr86 and Trp89 each contribute to the cholesterol site. Residues 88–108 form a helical membrane-spanning segment; it reads IWTVINHFSVWLATGLGTFYF. The Cytoplasmic segment spans residues 109–129; that stretch reads LKIANFSNSIFLYLKWRVKKV. The helical transmembrane segment at 130 to 150 threads the bilayer; it reads VLVLLLVTSVFLFLNIALINI. The Extracellular segment spans residues 151 to 184; that stretch reads HINASINGYRRNKTCSSDSSNFTRFSSLIVLTST. Residues Asn153, Asn162, and Asn171 are each glycosylated (N-linked (GlcNAc...) asparagine). Residue Val180 participates in cholesterol binding. The chain crosses the membrane as a helical span at residues 185-205; that stretch reads VFIFIPFTLSLAMFLLLIFSM. Residues 206–232 lie on the Cytoplasmic side of the membrane; sequence WKHRKKMQHTVKRSGDASTKAHRGVKS. Residues 233–253 traverse the membrane as a helical segment; it reads MMTFFLLYAIFSLSFFISVWT. Over 254–261 the chain is Extracellular; the sequence is SERLEENL. Residues 262–282 form a helical membrane-spanning segment; sequence IILSQVMGMAYPSCHSCVLIL. Cholesterol contacts are provided by Ser265 and Met268. The Cytoplasmic portion of the chain corresponds to 283-317; that stretch reads GNKKLRQASLSVLLWLRYMFKDGEPSGHKEFRESS.

It belongs to the G-protein coupled receptor T2R family. Core component of the TAS2R14-GNAI1 complex, consisting of TAS2R14, GNAI1, GNB1 and GNG2; within the complex interacts with GNAI1. Core component of the TAS2R14-GNAT3 complex, consisting of TAS2R14, GNAT3, GNB1 and GNG2; within the complex interacts with GNAT3. Core component of the TAS2R14-GNAS2 complex, consisting of TAS2R14, GNAS2, GNB1 and GNG2; within the complex interacts with GNAS2.

It is found in the membrane. It carries out the reaction Ca(2+)(in) = Ca(2+)(out). The enzyme catalyses 3',5'-cyclic AMP(in) = 3',5'-cyclic AMP(out). Its activity is regulated as follows. Basal activity is enhanced by binding to bitter tastants, such as flufenamic acid and aristolochic acid. Regulated by cholesterol in a concentration-dependent manner. Its function is as follows. Gustducin-linked G-protein coupled receptor that plays a role in the perception of bitterness. The activity of this receptor stimulates GNAT3, activating the gustducin G-protein pathway. Likely plays a role in sensing the chemical composition of the gastrointestinal content and other extra-oral tissues via the inhibitory G-protein pathways. This is Taste receptor type 2 member 14 (TAS2R14) from Pan paniscus (Pygmy chimpanzee).